The chain runs to 105 residues: UPF0145 protein jk0060 (105 aa).

It belongs to the UPF0145 family.

This is UPF0145 protein jk0060 from Corynebacterium jeikeium (strain K411).